Consider the following 715-residue polypeptide: Palmitoyltransferase ZDHHC5 (715 aa).

Residues 1–13 (MPAESGKRFKPSK) lie on the Cytoplasmic side of the membrane. Residues 14-34 (YVPVSAAAIFLVGATTLFFAF) form a helical membrane-spanning segment. Residues 35–38 (TCPG) are Extracellular-facing. Residues 39 to 59 (LSLYVSPAVPIYNAIMFLFVL) traverse the membrane as a helical segment. At 60–148 (ANFSMATFMD…NCIGRRNYRY (89 aa)) the chain is on the cytoplasmic side. Tyrosine 91 is modified (phosphotyrosine; by LYN). A DHHC domain is found at 104 to 154 (KWCATCRFYRPPRCSHCSVCDNCVEEFDHHCPWVNNCIGRRNYRYFFLFLL). Catalysis depends on cysteine 134, which acts as the S-palmitoyl cysteine intermediate. The chain crosses the membrane as a helical span at residues 149-169 (FFLFLLSLTAHIMGVFGFGLL). The Extracellular segment spans residues 170-191 (YVLYHIEELSGVRTAVTMAVMC). Residues 192–212 (VAGLFFIPVAGLTGFHVVLVA) form a helical membrane-spanning segment. Over 213 to 715 (RGRTTNEQVT…VGGTTYEISV (503 aa)) the chain is Cytoplasmic. Phosphoserine is present on serine 247. The disordered stretch occupies residues 289 to 715 (GELRRTKSKG…VGGTTYEISV (427 aa)). Residue threonine 294 is modified to Phosphothreonine. A phosphoserine mark is found at serine 296 and serine 299. Position 303 is a phosphothreonine (threonine 303). Serine 345 is subject to Phosphoserine. Threonine 348 and threonine 350 each carry phosphothreonine. Low complexity predominate over residues 359-373 (SSSSTSAAMPHSSSA). Residues serine 380, serine 398, serine 406, and serine 409 each carry the phosphoserine modification. Threonine 411 is modified (phosphothreonine). Residues serine 415, serine 425, serine 429, and serine 432 each carry the phosphoserine modification. A compositionally biased stretch (low complexity) spans 422–432 (SSGSRSSSLKS). Threonine 436 carries the phosphothreonine modification. Over residues 442–478 (QLQSIRSEGTTSTSYKSLANQTRNGSLSYDSLLTPSD) the composition is skewed to polar residues. A Phosphoserine modification is found at serine 529. Residue tyrosine 533 is modified to Phosphotyrosine; by FYN. Phosphoserine is present on serine 554. Arginine 617 is subject to Omega-N-methylarginine. The residue at position 621 (serine 621) is a Phosphoserine. The residue at position 659 (threonine 659) is a Phosphothreonine. Positions 666–677 (LKTTYSKSNGQP) are enriched in polar residues. Serine 684 and serine 694 each carry phosphoserine. Residue arginine 697 is modified to Omega-N-methylarginine.

This sequence belongs to the DHHC palmitoyltransferase family. ERF2/ZDHHC9 subfamily. Phosphorylation regulates association with endocytic proteins and its subcellular localization. Phosphorylation by LYN during fatty acid uptake leads to inactivation of the activity. In terms of processing, autopalmitoylated. Palmitoylation of the C-terminal tail regulates stimulation-dependent plasma membrane motility.

It localises to the cell membrane. Its subcellular location is the synapse. It carries out the reaction L-cysteinyl-[protein] + hexadecanoyl-CoA = S-hexadecanoyl-L-cysteinyl-[protein] + CoA. Palmitoyltransferase that catalyzes the addition of palmitate onto various protein substrates such as CTNND2, CD36, GSDMD, NLRP3, NOD1, NOD2, STAT3 and S1PR1 thus plays a role in various biological processes including cell adhesion, inflammation, fatty acid uptake, bacterial sensing or cardiac functions. Plays an important role in the regulation of synapse efficacy by mediating palmitoylation of delta-catenin/CTNND2, thereby increasing synaptic delivery and surface stabilization of alpha-amino-3-hydroxy-5-methyl-4-isoxazole propionic acid receptors (AMPARs). Under basal conditions, remains at the synaptic membrane through FYN-mediated phosphorylation that prevents association with endocytic proteins. Neuronal activity enhances the internalization and trafficking of DHHC5 from spines to dendritic shafts where it palmitoylates delta-catenin/CTNND2. Regulates cell adhesion at the plasma membrane by palmitoylating GOLGA7B and DSG2. Plays a role in innate immune response by mediating the palmitoylation of NOD1 and NOD2 and their proper recruitment to the bacterial entry site and phagosomes. Also participates in fatty acid uptake by palmitoylating CD36 and thereby targeting it to the plasma membrane. Upon binding of fatty acids to CD36, gets phosphorylated by LYN leading to inactivation and subsequent CD36 caveolar endocytosis. Controls oligodendrocyte development by catalyzing STAT3 palmitoylation. Acts as a regulator of inflammatory response by mediating palmitoylation of NLRP3 and GSDMD. Palmitoylates NLRP3 to promote inflammasome assembly and activation. Activates pyroptosis by catalyzing palmitoylation of gasdermin-D (GSDMD), thereby promoting membrane translocation and pore formation of GSDMD. This Homo sapiens (Human) protein is Palmitoyltransferase ZDHHC5.